Consider the following 465-residue polypeptide: Probable glucan endo-1,3-beta-glucosidase eglC (465 aa).

Positions 1–19 are cleaved as a signal peptide; it reads MFTKTQILALALSIASAEA. The active-site Proton donor is Glu128. The N-linked (GlcNAc...) asparagine glycan is linked to Asn183. Glu239 acts as the Nucleophile in catalysis. Asn318 is a glycosylation site (N-linked (GlcNAc...) asparagine). Low complexity-rich tracts occupy residues 320 to 333 and 380 to 438; these read SSASASASGSSAQS and SPSA…ATPA. Disordered stretches follow at residues 320–356 and 380–440; these read SSASASASGSSAQSTGFVSTTKPAASPSGSSGLGHGG and SPSA…PADF. Gly442 carries GPI-anchor amidated glycine lipidation. A propeptide spans 443 to 465 (removed in mature form); sequence AGSRLSGSIFGAAMLVAALAVAL.

Belongs to the glycosyl hydrolase 17 family. Post-translationally, the GPI-anchor is attached to the protein in the endoplasmic reticulum and serves to target the protein to the cell surface. There, the glucosamine-inositol phospholipid moiety is cleaved off and the GPI-modified mannoprotein is covalently attached via its lipidless GPI glycan remnant to the 1,6-beta-glucan of the outer cell wall layer.

Its subcellular location is the cell membrane. It localises to the secreted. The protein localises to the cell wall. The catalysed reaction is Hydrolysis of (1-&gt;3)-beta-D-glucosidic linkages in (1-&gt;3)-beta-D-glucans.. Functionally, glucanases play a role in cell expansion during growth, in cell-cell fusion during mating, and in spore release during sporulation. This enzyme may be involved in beta-glucan degradation and also function biosynthetically as a transglycosylase. This Emericella nidulans (strain FGSC A4 / ATCC 38163 / CBS 112.46 / NRRL 194 / M139) (Aspergillus nidulans) protein is Probable glucan endo-1,3-beta-glucosidase eglC (eglC).